A 329-amino-acid polypeptide reads, in one-letter code: L-arabinose-binding periplasmic protein (329 aa).

Residues 1–23 form the signal peptide; that stretch reads MHKFTKALAAIGLAAVMSQSAMA.

It belongs to the bacterial solute-binding protein 2 family.

It localises to the periplasm. Functionally, involved in the high-affinity L-arabinose membrane transport system. Binds with high affinity to arabinose, but can also bind D-galactose (approximately 2-fold reduction) and D-fucose (approximately 40-fold reduction). This is L-arabinose-binding periplasmic protein (araF) from Escherichia coli (strain K12).